The sequence spans 427 residues: Glutamate-1-semialdehyde 2,1-aminomutase (427 aa).

Lysine 265 carries the post-translational modification N6-(pyridoxal phosphate)lysine.

This sequence belongs to the class-III pyridoxal-phosphate-dependent aminotransferase family. HemL subfamily. Homodimer. Pyridoxal 5'-phosphate is required as a cofactor.

The protein resides in the cytoplasm. It carries out the reaction (S)-4-amino-5-oxopentanoate = 5-aminolevulinate. Its pathway is porphyrin-containing compound metabolism; protoporphyrin-IX biosynthesis; 5-aminolevulinate from L-glutamyl-tRNA(Glu): step 2/2. This Pseudomonas fluorescens (strain Pf0-1) protein is Glutamate-1-semialdehyde 2,1-aminomutase.